The primary structure comprises 260 residues: Hydroxyacylglutathione hydrolase (260 aa).

Zn(2+) contacts are provided by H66, H68, D70, H71, H125, D150, and H188.

Belongs to the metallo-beta-lactamase superfamily. Glyoxalase II family. In terms of assembly, monomer. Zn(2+) serves as cofactor.

It carries out the reaction an S-(2-hydroxyacyl)glutathione + H2O = a 2-hydroxy carboxylate + glutathione + H(+). It functions in the pathway secondary metabolite metabolism; methylglyoxal degradation; (R)-lactate from methylglyoxal: step 2/2. In terms of biological role, thiolesterase that catalyzes the hydrolysis of S-D-lactoyl-glutathione to form glutathione and D-lactic acid. The polypeptide is Hydroxyacylglutathione hydrolase (Prochlorococcus marinus (strain MIT 9303)).